Reading from the N-terminus, the 557-residue chain is NAC domain-containing protein 17 (557 aa).

Positions 16-166 constitute an NAC domain; the sequence is SAPGFRFHPT…YYALYKLFKK (151 aa). The DNA-binding element occupies 115–172; the sequence is VGLKKTLVFYRGRAPSGERTDWVMHEYTMDEDELGRCKNPQEYYALYKLFKKSGAGPK. A helical membrane pass occupies residues 526 to 546; the sequence is FLLLSIVGALCAIFWVLVATV.

As to expression, expressed in roots, rosette leaves, cauline leaves, shoot apex, stems and flowers.

It is found in the endoplasmic reticulum membrane. Its subcellular location is the nucleus. Its function is as follows. Transcriptional activator activated by proteolytic cleavage through regulated intramembrane proteolysis (RIP). Transcriptional activator that acts as a positive regulator of AOX1A during mitochondrial dysfunction. Binds directly to AOX1A promoter. Mediates mitochondrial retrograde signaling. The chain is NAC domain-containing protein 17 from Arabidopsis thaliana (Mouse-ear cress).